The chain runs to 407 residues: Arginine deiminase (407 aa).

The active-site Amidino-cysteine intermediate is C397.

The protein belongs to the arginine deiminase family.

It is found in the cytoplasm. It carries out the reaction L-arginine + H2O = L-citrulline + NH4(+). The protein operates within amino-acid degradation; L-arginine degradation via ADI pathway; carbamoyl phosphate from L-arginine: step 1/2. The protein is Arginine deiminase of Listeria welshimeri serovar 6b (strain ATCC 35897 / DSM 20650 / CCUG 15529 / CIP 8149 / NCTC 11857 / SLCC 5334 / V8).